The sequence spans 102 residues: Large ribosomal subunit protein uL24 (102 aa).

Belongs to the universal ribosomal protein uL24 family. In terms of assembly, part of the 50S ribosomal subunit.

Functionally, one of two assembly initiator proteins, it binds directly to the 5'-end of the 23S rRNA, where it nucleates assembly of the 50S subunit. One of the proteins that surrounds the polypeptide exit tunnel on the outside of the subunit. This chain is Large ribosomal subunit protein uL24, found in Agrobacterium fabrum (strain C58 / ATCC 33970) (Agrobacterium tumefaciens (strain C58)).